The chain runs to 240 residues: 1-(5-phosphoribosyl)-5-[(5-phosphoribosylamino)methylideneamino] imidazole-4-carboxamide isomerase (240 aa).

Aspartate 8 (proton acceptor) is an active-site residue. Aspartate 129 (proton donor) is an active-site residue.

This sequence belongs to the HisA/HisF family.

Its subcellular location is the cytoplasm. The enzyme catalyses 1-(5-phospho-beta-D-ribosyl)-5-[(5-phospho-beta-D-ribosylamino)methylideneamino]imidazole-4-carboxamide = 5-[(5-phospho-1-deoxy-D-ribulos-1-ylimino)methylamino]-1-(5-phospho-beta-D-ribosyl)imidazole-4-carboxamide. It participates in amino-acid biosynthesis; L-histidine biosynthesis; L-histidine from 5-phospho-alpha-D-ribose 1-diphosphate: step 4/9. In Listeria welshimeri serovar 6b (strain ATCC 35897 / DSM 20650 / CCUG 15529 / CIP 8149 / NCTC 11857 / SLCC 5334 / V8), this protein is 1-(5-phosphoribosyl)-5-[(5-phosphoribosylamino)methylideneamino] imidazole-4-carboxamide isomerase.